Reading from the N-terminus, the 147-residue chain is Small ribosomal subunit protein uS12 (147 aa).

Belongs to the universal ribosomal protein uS12 family. Part of the 30S ribosomal subunit.

Its function is as follows. With S4 and S5 plays an important role in translational accuracy. Located at the interface of the 30S and 50S subunits. The polypeptide is Small ribosomal subunit protein uS12 (Hyperthermus butylicus (strain DSM 5456 / JCM 9403 / PLM1-5)).